Here is a 304-residue protein sequence, read N- to C-terminus: ATP phosphoribosyltransferase (304 aa).

This sequence belongs to the ATP phosphoribosyltransferase family.

It is found in the cytoplasm. The catalysed reaction is 1-(5-phospho-beta-D-ribosyl)-ATP + diphosphate = 5-phospho-alpha-D-ribose 1-diphosphate + ATP. It participates in amino-acid biosynthesis; L-histidine biosynthesis; L-histidine from 5-phospho-alpha-D-ribose 1-diphosphate: step 1/9. Its function is as follows. Catalyzes the condensation of ATP and 5-phosphoribose 1-diphosphate to form N'-(5'-phosphoribosyl)-ATP (PR-ATP). Has a crucial role in the pathway because the rate of histidine biosynthesis seems to be controlled primarily by regulation of the enzymatic activity. This chain is ATP phosphoribosyltransferase (HIS1), found in Debaryomyces hansenii (strain ATCC 36239 / CBS 767 / BCRC 21394 / JCM 1990 / NBRC 0083 / IGC 2968) (Yeast).